A 336-amino-acid polypeptide reads, in one-letter code: Calcium uniporter protein 3, mitochondrial (336 aa).

A mitochondrion-targeting transit peptide spans 1–69 (MAMRKLLSKK…RFMHNSAMIR (69 aa)). The next 2 helical transmembrane spans lie at 231–251 (LWAGLGYLILQTAGFMRLTFW) and 257–277 (VMEPICFYVTSVYFMAGYAFF). The Selectivity filter motif lies at 255 to 263 (WDVMEPICF). Glu259 is a Ca(2+) binding site.

This sequence belongs to the MCU (TC 1.A.77) family.

The protein resides in the mitochondrion inner membrane. It carries out the reaction Ca(2+)(in) = Ca(2+)(out). In terms of biological role, mitochondrial inner membrane calcium uniporter that mediates calcium uptake into mitochondria. Constitutes a pore-forming and calcium-conducting subunit. Mitochondrial calcium homeostasis plays key roles in cellular physiology and regulates cell bioenergetics, cytoplasmic calcium signals and activation of cell death pathways. The polypeptide is Calcium uniporter protein 3, mitochondrial (Arabidopsis thaliana (Mouse-ear cress)).